The chain runs to 365 residues: Synapse-associated protein 1 (365 aa).

The segment at 1 to 65 (MFGGLSSWLG…QPPTEDPQFL (65 aa)) is disordered. Low complexity predominate over residues 52-62 (EQQQQPPTEDP). Residues 172–224 (VQFNFDFDQMYPVALVMLQEDELLSKMRFALVPKLVKEEVFWRNYFYRISLIK) form the BSD domain. The tract at residues 237–259 (QASGKEEKSSNRDDNLPLTEAVR) is disordered. The segment covering 240 to 251 (GKEEKSSNRDDN) has biased composition (basic and acidic residues). Position 262 is a phosphothreonine (Thr262). A phosphoserine mark is found at Ser283, Ser298, and Ser327. Residues 344-365 (VAESEKRDENWDKEIEKMLQES) form a disordered region. Residues 346-365 (ESEKRDENWDKEIEKMLQES) show a composition bias toward basic and acidic residues.

In terms of assembly, interacts (via phosphorylated form and BSD domain) with AKT1; this interaction is enhanced in a mTORC2-mediated manner in response to epidermal growth factor (EGF) stimulation and activates AKT1. Post-translationally, phosphorylated. Phosphorylation increases in a mTORC2-mediated manner in response to epidermal growth factor (EGF) stimulation. As to expression, expressed in the liver, kidney, skeletal muscle and in white and brown adipose tissues. Expressed in the cortex, cerebellum, thalamus, hippocampus, braistem, olfactory bulb, spinal cord and striatum of the brain. Expressed in most neuropil regions containing glutamatergic synaptic terminals. Expressed in the CA1, CA2 and CA3 perikarya of the hippocampus. Expressed in neurons and Purkinje cells (at the protein level).

The protein resides in the cytoplasm. It is found in the perinuclear region. It localises to the golgi apparatus. The protein localises to the perikaryon. Its subcellular location is the cell projection. The protein resides in the axon. It is found in the dendrite. It localises to the growth cone. The protein localises to the presynaptic cell membrane. Its subcellular location is the postsynaptic cell membrane. The protein resides in the membrane. Plays a role in adipocyte differentiation by promoting mTORC2-mediated phosphorylation of AKT1 at 'Ser-473' after growth factor stimulation. In Mus musculus (Mouse), this protein is Synapse-associated protein 1.